A 298-amino-acid polypeptide reads, in one-letter code: Olfactory receptor 52Z1P (298 aa).

The Extracellular portion of the chain corresponds to 1 to 14 (MGIPGLEGLHTWIS). A helical transmembrane segment spans residues 15-35 (IPFSFMYIVAVAGNIFLIFLI). At 36-43 (MTERSLHE) the chain is on the cytoplasmic side. Residues 44 to 64 (PMYLFLSMLASADFLLATAAA) form a helical membrane-spanning segment. Residues 65-85 (PKVLAILWFHSMDISFGSCVS) are Extracellular-facing. A disulfide bond links C83 and C164. A helical membrane pass occupies residues 86 to 106 (QMFFIHFIFVAESAILLAMAF). Residues 107-128 (DRYVAICYPLRYTILTSSAVRK) lie on the Cytoplasmic side of the membrane. The helical transmembrane segment at 129-149 (IGIAAVVRSFFICCPFIFLVY) threads the bilayer. Topologically, residues 150–178 (RLTYCGRNIIPHSYCEHIARLACGNINVN) are extracellular. Residues 179 to 199 (IIYGLTVALLSTGLDIVLIII) traverse the membrane as a helical segment. Over 200-223 (SYTMILHSVFQISSWAARFKALST) the chain is Cytoplasmic. Residues 224–244 (CGSHICVIFMFYTPAFFSFLA) traverse the membrane as a helical segment. The Extracellular portion of the chain corresponds to 245 to 257 (HRFGGKTIPHHIH). Residues 258–278 (ILVGSLYVLVPPMLNPIIYGV) traverse the membrane as a helical segment. The Cytoplasmic segment spans residues 279–298 (KTKQIKDRVILLFSPISVCC).

This sequence belongs to the G-protein coupled receptor 1 family.

The protein resides in the cell membrane. Functionally, odorant receptor. The protein is Olfactory receptor 52Z1P of Homo sapiens (Human).